An 861-amino-acid chain; its full sequence is Leucine--tRNA ligase (861 aa).

A 'HIGH' region motif is present at residues 42–52 (PYPSGRLHMGH). The 'KMSKS' region signature appears at 619 to 623 (KMSKS). Lysine 622 is a binding site for ATP.

The protein belongs to the class-I aminoacyl-tRNA synthetase family.

The protein resides in the cytoplasm. The enzyme catalyses tRNA(Leu) + L-leucine + ATP = L-leucyl-tRNA(Leu) + AMP + diphosphate. This is Leucine--tRNA ligase from Haemophilus influenzae (strain PittGG).